Reading from the N-terminus, the 211-residue chain is Large ribosomal subunit protein uL3 (211 aa).

The span at 130-139 (QDATHGNSLS) shows a compositional bias: polar residues. A disordered region spans residues 130–151 (QDATHGNSLSHRAPGSIGQNQT). Glutamine 150 is modified (N5-methylglutamine).

The protein belongs to the universal ribosomal protein uL3 family. Part of the 50S ribosomal subunit. Forms a cluster with proteins L14 and L19. Methylated by PrmB.

One of the primary rRNA binding proteins, it binds directly near the 3'-end of the 23S rRNA, where it nucleates assembly of the 50S subunit. This Alcanivorax borkumensis (strain ATCC 700651 / DSM 11573 / NCIMB 13689 / SK2) protein is Large ribosomal subunit protein uL3.